The chain runs to 287 residues: Protein REVEILLE 2 (287 aa).

Positions 31-85 (TITKQREKWTEAEHEKFVEALKLYGRAWRRIEEHVGTKTAVQIRSHAQKFFTKVA) constitute an HTH myb-type domain. The segment at residues 58 to 81 (WRRIEEHVGTKTAVQIRSHAQKFF) is a DNA-binding region (H-T-H motif). The segment at 134–177 (QDEDNRSPTSVLSAHGSDGLGSIGSNSPNSSSAELSSHTEESLS) is disordered. The segment covering 156 to 169 (IGSNSPNSSSAELS) has biased composition (low complexity).

The protein resides in the nucleus. Its function is as follows. Positive regulator for cold-responsive gene expression and cold tolerance. Part of a regulatory feedback loop that controls a subset of the circadian outputs and modulates the central oscillator. Negatively self-regulates its own expression. This chain is Protein REVEILLE 2 (RVE2), found in Arabidopsis thaliana (Mouse-ear cress).